Here is a 309-residue protein sequence, read N- to C-terminus: Prepilin leader peptidase/N-methyltransferase (309 aa).

A helical membrane pass occupies residues 35-55; sequence MQLAFAIVLGLVVGSFLNVVV. The Zn(2+) site is built by Cys-96, Cys-99, Cys-121, and Cys-124. The next 6 helical transmembrane spans lie at 147-167, 183-203, 207-227, 230-250, 253-273, and 288-308; these read LALFGPSGAALAAFGLCAALL, LTLPLLWAGLCVNLWGTFASL, VIGAIAGYLFLWCILWLFKLL, IEGIGYGDLKLLAALGAWLGW, LPQVVLIAAVAGAAVGLVATW, and FLAAGGAATLFFGTPFYLLLG.

The protein belongs to the peptidase A24 family. Zn(2+) is required as a cofactor.

The protein localises to the cell inner membrane. The enzyme catalyses Typically cleaves a -Gly-|-Phe- bond to release an N-terminal, basic peptide of 5-8 residues from type IV prepilin, and then N-methylates the new N-terminal amino group, the methyl donor being S-adenosyl-L-methionine.. Functionally, plays an essential role in type IV pili and type II pseudopili formation by proteolytically removing the leader sequence from substrate proteins and subsequently monomethylating the alpha-amino group of the newly exposed N-terminal phenylalanine. This Burkholderia pseudomallei (strain 1026b) protein is Prepilin leader peptidase/N-methyltransferase (gspO).